The primary structure comprises 93 residues: SH3 domain-binding glutamic acid-rich-like protein 3 (93 aa).

Serine 2 bears the N-acetylserine mark. A Glutaredoxin domain is found at 2 to 93; it reads SGLRVYSTSV…NTLQEFLKLA (92 aa). A glycan (O-linked (GalNAc...) threonine) is linked at threonine 9.

It belongs to the SH3BGR family. As to quaternary structure, homodimer. Interacts with MYO1C (via its IQ motifs); the interaction is dependent on calcium and takes place at membrane ruffles. In terms of processing, may be glycosylated.

It localises to the cytoplasm. It is found in the cytosol. The protein localises to the cell projection. Its subcellular location is the ruffle membrane. The protein resides in the nucleus. In terms of biological role, could act as a modulator of glutaredoxin biological activity. May play a role in cytoskeleton organization. In Bos taurus (Bovine), this protein is SH3 domain-binding glutamic acid-rich-like protein 3 (SH3BGRL3).